We begin with the raw amino-acid sequence, 244 residues long: Homeobox-leucine zipper protein HOX14 (244 aa).

Residues 25–64 (ASGEVQGERPRARRRRRRGARCVGGGGGGGEVDGGDPKKR) are disordered. A compositionally biased stretch (basic residues) spans 35–44 (RARRRRRRGA). A compositionally biased stretch (gly residues) spans 46-56 (CVGGGGGGGEV). Positions 59 to 118 (GDPKKRRLSDEQVEMLELSFREERKLETGRKVHLASELGLDPKQVAVWFQNRRARHKSKL) form a DNA-binding region, homeobox. The stretch at 108 to 167 (QNRRARHKSKLLEEEFSKLKHAHDAAILHKCHLENEVLRLKERLVVAEEEVRRLRSAAGS) forms a coiled coil.

It belongs to the HD-ZIP homeobox family. Class I subfamily. As to expression, expressed in roots, stems, leaf blades and panicles.

Its subcellular location is the nucleus. Its function is as follows. Probable transcription factor. This Oryza sativa subsp. indica (Rice) protein is Homeobox-leucine zipper protein HOX14 (HOX14).